The sequence spans 360 residues: 3-dehydroquinate synthase (360 aa).

NAD(+) contacts are provided by residues 71-76 (DGEQFK), 105-109 (GVIGD), 129-130 (TT), Lys142, Lys151, and 169-172 (FLKT). Residues Glu184, His247, and His264 each coordinate Zn(2+).

Belongs to the sugar phosphate cyclases superfamily. Dehydroquinate synthase family. NAD(+) serves as cofactor. Co(2+) is required as a cofactor. Requires Zn(2+) as cofactor.

The protein resides in the cytoplasm. The enzyme catalyses 7-phospho-2-dehydro-3-deoxy-D-arabino-heptonate = 3-dehydroquinate + phosphate. The protein operates within metabolic intermediate biosynthesis; chorismate biosynthesis; chorismate from D-erythrose 4-phosphate and phosphoenolpyruvate: step 2/7. In terms of biological role, catalyzes the conversion of 3-deoxy-D-arabino-heptulosonate 7-phosphate (DAHP) to dehydroquinate (DHQ). The chain is 3-dehydroquinate synthase from Buchnera aphidicola subsp. Schizaphis graminum (strain Sg).